Consider the following 545-residue polypeptide: CTP synthase (545 aa).

The amidoligase domain stretch occupies residues 1–266; it reads MTHFIFVTGG…DDLICERFGY (266 aa). S13 serves as a coordination point for CTP. S13 contacts UTP. ATP contacts are provided by residues 14-19 and D71; that span reads SLGKGI. Residues D71 and E140 each coordinate Mg(2+). Residues 147-149, 187-192, and K223 each bind CTP; these read DIE and KTKPTQ. UTP contacts are provided by residues 187 to 192 and K223; that span reads KTKPTQ. 239-241 is a binding site for ATP; it reads KDA. A Glutamine amidotransferase type-1 domain is found at 292-543; it reads RVAMVGKYVE…IDAAKKQHLK (252 aa). G353 serves as a coordination point for L-glutamine. C380 (nucleophile; for glutamine hydrolysis) is an active-site residue. L-glutamine-binding positions include 381 to 384, E404, and R471; that span reads LGMQ. Residues H516 and E518 contribute to the active site.

This sequence belongs to the CTP synthase family. As to quaternary structure, homotetramer.

The catalysed reaction is UTP + L-glutamine + ATP + H2O = CTP + L-glutamate + ADP + phosphate + 2 H(+). The enzyme catalyses L-glutamine + H2O = L-glutamate + NH4(+). It carries out the reaction UTP + NH4(+) + ATP = CTP + ADP + phosphate + 2 H(+). The protein operates within pyrimidine metabolism; CTP biosynthesis via de novo pathway; CTP from UDP: step 2/2. Its activity is regulated as follows. Allosterically activated by GTP, when glutamine is the substrate; GTP has no effect on the reaction when ammonia is the substrate. The allosteric effector GTP functions by stabilizing the protein conformation that binds the tetrahedral intermediate(s) formed during glutamine hydrolysis. Inhibited by the product CTP, via allosteric rather than competitive inhibition. Catalyzes the ATP-dependent amination of UTP to CTP with either L-glutamine or ammonia as the source of nitrogen. Regulates intracellular CTP levels through interactions with the four ribonucleotide triphosphates. This Acinetobacter baylyi (strain ATCC 33305 / BD413 / ADP1) protein is CTP synthase.